We begin with the raw amino-acid sequence, 62 residues long: Photosystem II reaction center protein Z (62 aa).

2 helical membrane-spanning segments follow: residues 8 to 28 (ALFA…VILA) and 41 to 61 (FSGA…NSFI).

The protein belongs to the PsbZ family. PSII is composed of 1 copy each of membrane proteins PsbA, PsbB, PsbC, PsbD, PsbE, PsbF, PsbH, PsbI, PsbJ, PsbK, PsbL, PsbM, PsbT, PsbY, PsbZ, Psb30/Ycf12, at least 3 peripheral proteins of the oxygen-evolving complex and a large number of cofactors. It forms dimeric complexes.

The protein localises to the plastid. It is found in the chloroplast thylakoid membrane. Functionally, may control the interaction of photosystem II (PSII) cores with the light-harvesting antenna, regulates electron flow through the 2 photosystem reaction centers. PSII is a light-driven water plastoquinone oxidoreductase, using light energy to abstract electrons from H(2)O, generating a proton gradient subsequently used for ATP formation. This is Photosystem II reaction center protein Z from Chara vulgaris (Common stonewort).